A 504-amino-acid chain; its full sequence is Anaerobic nitric oxide reductase transcription regulator NorR (504 aa).

At D57 the chain carries 4-aspartylphosphate. One can recognise a Sigma-54 factor interaction domain in the interval 187 to 416; that stretch reads MIGLSPGMTQ…LEHAIHRAVV (230 aa). Residues 215-222 and 278-287 contribute to the ATP site; these read GETGTGKE and ADNGTLFLDE. Residues 479–498 constitute a DNA-binding region (H-T-H motif); that stretch reads WAACARMLETDVANLHRLAK.

Its pathway is nitrogen metabolism; nitric oxide reduction. In terms of biological role, required for the expression of anaerobic nitric oxide (NO) reductase, acts as a transcriptional activator for at least the norVW operon. Activation also requires sigma-54. The polypeptide is Anaerobic nitric oxide reductase transcription regulator NorR (Shigella flexneri serotype 5b (strain 8401)).